The primary structure comprises 447 residues: N-succinylarginine dihydrolase (447 aa).

Substrate-binding positions include 19–28 (AGLSFGNEAS), asparagine 110, and 137–138 (HR). Residue glutamate 174 is part of the active site. A substrate-binding site is contributed by arginine 212. Histidine 248 is an active-site residue. 2 residues coordinate substrate: aspartate 250 and asparagine 359. Cysteine 365 serves as the catalytic Nucleophile.

The protein belongs to the succinylarginine dihydrolase family. Homodimer.

The enzyme catalyses N(2)-succinyl-L-arginine + 2 H2O + 2 H(+) = N(2)-succinyl-L-ornithine + 2 NH4(+) + CO2. The protein operates within amino-acid degradation; L-arginine degradation via AST pathway; L-glutamate and succinate from L-arginine: step 2/5. Functionally, catalyzes the hydrolysis of N(2)-succinylarginine into N(2)-succinylornithine, ammonia and CO(2). The polypeptide is N-succinylarginine dihydrolase (Escherichia coli O1:K1 / APEC).